The sequence spans 673 residues: Polyadenylate-binding protein, cytoplasmic and nuclear (673 aa).

Residues 1–39 form a disordered region; that stretch reads MSAETATSPAPAAETPVAPAPATQTTPAEGAPTPAAAAP. 4 RRM domains span residues 46 to 124, 134 to 211, 227 to 304, and 330 to 407; these read ASLY…WSQR, GNIF…HHVG, TNVY…RAQT, and VNLY…LAQR. A disordered region spans residues 300–322; that stretch reads GRAQTKSEREAELKKSHEEKRLE. The span at 304-322 shows a compositional bias: basic and acidic residues; that stretch reads TKSEREAELKKSHEEKRLE. Disordered regions lie at residues 509–572 and 644–673; these read APGY…AGRL and WGKD…EKKE. The PABC domain occupies 569-646; it reads AGRLDAQSLA…ALRVLAEWGK (78 aa).

It belongs to the polyadenylate-binding protein type-1 family.

It localises to the cytoplasm. Its subcellular location is the nucleus. Binds the poly(A) tail of mRNA. Appears to be an important mediator of the multiple roles of the poly(A) tail in mRNA biogenesis, stability and translation. In the nucleus, involved in both mRNA cleavage and polyadenylation. Is also required for efficient mRNA export to the cytoplasm. Acts in concert with a poly(A)-specific nuclease (PAN) to affect poly(A) tail shortening, which may occur concomitantly with either nucleocytoplasmic mRNA transport or translational initiation. In the cytoplasm, stimulates translation initiation and regulates mRNA decay through translation termination-coupled poly(A) shortening, probably mediated by PAN. The polypeptide is Polyadenylate-binding protein, cytoplasmic and nuclear (PAB1) (Cryptococcus neoformans var. neoformans serotype D (strain B-3501A) (Filobasidiella neoformans)).